A 413-amino-acid polypeptide reads, in one-letter code: Peptide chain release factor 1, mitochondrial (413 aa).

Glutamine 287 bears the N5-methylglutamine mark. A disordered region spans residues 335–363; sequence RLEKEEKERKARKSQVSSTNRSDKIRTYN.

This sequence belongs to the prokaryotic/mitochondrial release factor family. Methylation of glutamine in the GGQ triplet is conserved from bacteria to mammals. N5-methylated on Gln-287 by MTQ1.

The protein resides in the mitochondrion. In terms of biological role, mitochondrial peptide chain release factor that directs the termination of translation in response to the peptide chain termination codons UAA and UAG. This Saccharomyces cerevisiae (strain ATCC 204508 / S288c) (Baker's yeast) protein is Peptide chain release factor 1, mitochondrial (MRF1).